Consider the following 342-residue polypeptide: Ornithine carbamoyltransferase, catabolic (342 aa).

Carbamoyl phosphate is bound by residues Ser-59–Thr-62, Ser-83, Arg-110, and His-137–Gln-140. Residues Asn-169, Asp-235, and Ser-239 to Leu-240 each bind L-ornithine. Carbamoyl phosphate is bound by residues Cys-276–Leu-277 and Arg-328.

Belongs to the aspartate/ornithine carbamoyltransferase superfamily. OTCase family. Dodecamer (tetramer of trimers).

Its subcellular location is the cytoplasm. The catalysed reaction is carbamoyl phosphate + L-ornithine = L-citrulline + phosphate + H(+). Its pathway is amino-acid degradation; L-arginine degradation via ADI pathway; carbamoyl phosphate from L-arginine: step 2/2. In terms of biological role, nvolved in the catabolism of arginine. Catalyzes the phosphorolysis of citrulline, the reverse reaction of the biosynthetic one, yielding ornithine and carbamoyl phosphate which serve to generate ATP from ADP. This is Ornithine carbamoyltransferase, catabolic (arcB) from Malacoplasma penetrans (strain HF-2) (Mycoplasma penetrans).